The chain runs to 119 residues: Holo-[acyl-carrier-protein] synthase (119 aa).

D8 and E58 together coordinate Mg(2+).

This sequence belongs to the P-Pant transferase superfamily. AcpS family. The cofactor is Mg(2+).

The protein resides in the cytoplasm. The catalysed reaction is apo-[ACP] + CoA = holo-[ACP] + adenosine 3',5'-bisphosphate + H(+). In terms of biological role, transfers the 4'-phosphopantetheine moiety from coenzyme A to a Ser of acyl-carrier-protein. This chain is Holo-[acyl-carrier-protein] synthase, found in Bacillus cereus (strain ZK / E33L).